Consider the following 83-residue polypeptide: Apolipoprotein C-I, acidic form (83 aa).

The N-terminal stretch at M1 to G26 is a signal peptide.

Belongs to the apolipoprotein C1 family.

It localises to the secreted. The sequence is that of Apolipoprotein C-I, acidic form (APOC1A) from Gorilla gorilla gorilla (Western lowland gorilla).